Consider the following 548-residue polypeptide: Chaperonin GroEL (548 aa).

ATP contacts are provided by residues 30–33, K51, 87–91, G415, 479–481, and D495; these read TLGP, DGTTT, and NAA. The segment at 525–548 is disordered; it reads PKEDKTSDASSSPAGGMGGMGGMM. Positions 539–548 are enriched in gly residues; that stretch reads GGMGGMGGMM.

This sequence belongs to the chaperonin (HSP60) family. As to quaternary structure, forms a cylinder of 14 subunits composed of two heptameric rings stacked back-to-back. Interacts with the co-chaperonin GroES.

The protein localises to the cytoplasm. It catalyses the reaction ATP + H2O + a folded polypeptide = ADP + phosphate + an unfolded polypeptide.. Its function is as follows. Together with its co-chaperonin GroES, plays an essential role in assisting protein folding. The GroEL-GroES system forms a nano-cage that allows encapsulation of the non-native substrate proteins and provides a physical environment optimized to promote and accelerate protein folding. The sequence is that of Chaperonin GroEL from Buchnera aphidicola subsp. Rhopalosiphum padi.